We begin with the raw amino-acid sequence, 184 residues long: MKPGKRVPLARPNRINKEIRVTEVRLTGIEGEQIGIVSIAVALQKAEEAGVDLVEISPNADPPVCRVMDYGKFLYEKSKSIKDQKKKQRVIQVKEVKFRPGTDEGDYQVKLRSLTRFLEEGDKAKITLRFRGREMAHQQIGMAMLERIRRDLCESENSIALVESFPARIEGRQISMVLAPKKKQ.

This sequence belongs to the IF-3 family. As to quaternary structure, monomer.

Its subcellular location is the cytoplasm. IF-3 binds to the 30S ribosomal subunit and shifts the equilibrium between 70S ribosomes and their 50S and 30S subunits in favor of the free subunits, thus enhancing the availability of 30S subunits on which protein synthesis initiation begins. The protein is Translation initiation factor IF-3 of Hamiltonella defensa subsp. Acyrthosiphon pisum (strain 5AT).